We begin with the raw amino-acid sequence, 490 residues long: Aspartyl/glutamyl-tRNA(Asn/Gln) amidotransferase subunit B (490 aa).

This sequence belongs to the GatB/GatE family. GatB subfamily. Heterotrimer of A, B and C subunits.

The enzyme catalyses L-glutamyl-tRNA(Gln) + L-glutamine + ATP + H2O = L-glutaminyl-tRNA(Gln) + L-glutamate + ADP + phosphate + H(+). The catalysed reaction is L-aspartyl-tRNA(Asn) + L-glutamine + ATP + H2O = L-asparaginyl-tRNA(Asn) + L-glutamate + ADP + phosphate + 2 H(+). Functionally, allows the formation of correctly charged Asn-tRNA(Asn) or Gln-tRNA(Gln) through the transamidation of misacylated Asp-tRNA(Asn) or Glu-tRNA(Gln) in organisms which lack either or both of asparaginyl-tRNA or glutaminyl-tRNA synthetases. The reaction takes place in the presence of glutamine and ATP through an activated phospho-Asp-tRNA(Asn) or phospho-Glu-tRNA(Gln). The chain is Aspartyl/glutamyl-tRNA(Asn/Gln) amidotransferase subunit B from Prochlorococcus marinus (strain MIT 9515).